The sequence spans 363 residues: Glyceraldehyde-3-phosphate dehydrogenase, muscle (363 aa).

The interaction with WARS stretch occupies residues 1-176; the sequence is MVKVGVNGFG…KYDKSLKIVS (176 aa). The residue at position 3 (lysine 3) is an N6,N6-dimethyllysine. Position 7 is a deamidated asparagine (asparagine 7). NAD(+) contacts are provided by residues 11–12 and aspartate 33; that span reads RI. The residue at position 70 (tyrosine 70) is a Phosphotyrosine. Lysine 89 bears the N6-acetyllysine mark. Residue asparagine 92 is modified to Deamidated asparagine. Position 94 is an N6,N6-dimethyllysine (lysine 94). A Deamidated asparagine modification is found at asparagine 98. At threonine 103 the chain carries Phosphothreonine. Positions 108 and 150 each coordinate NAD(+). A phosphoserine mark is found at serine 150 and serine 176. Deamidated asparagine is present on asparagine 177. Residue serine 179 is modified to Phosphoserine. Residue 179-181 coordinates D-glyceraldehyde 3-phosphate; it reads SCT. The active-site Nucleophile is the cysteine 180. Position 180 is an ADP-ribosylcysteine; by autocatalysis; in irreversibly inhibited form (cysteine 180). At cysteine 180 the chain carries Cysteine persulfide. Residue cysteine 180 is modified to S-(2-succinyl)cysteine. At cysteine 180 the chain carries S-nitrosocysteine; in reversibly inhibited form. Residue threonine 181 is modified to Phosphothreonine. At asparagine 183 the chain carries Deamidated asparagine. Threonine 205, threonine 210, and threonine 212 each carry phosphothreonine. Threonine 210 lines the D-glyceraldehyde 3-phosphate pocket. A Glycyl lysine isopeptide (Lys-Gly) (interchain with G-Cter in SUMO2) cross-link involves residue lysine 214. Position 222 is an N6,N6-dimethyllysine; alternate (lysine 222). At lysine 222 the chain carries N6-acetyllysine; alternate. Position 222 is an N6-malonyllysine; alternate (lysine 222). Threonine 239 carries the phosphothreonine modification. Residue 239–240 coordinates D-glyceraldehyde 3-phosphate; it reads TG. At lysine 243 the chain carries N6,N6-dimethyllysine; alternate. Residue lysine 243 is modified to N6-malonyllysine; alternate. Lysine 247 is subject to N6-acetyllysine. Asparagine 253 carries the deamidated asparagine modification. Lysine 255 is modified (N6,N6-dimethyllysine; alternate). Position 255 is an N6-acetyllysine; alternate (lysine 255). Residue threonine 257 is modified to Phosphothreonine. Residue arginine 262 participates in D-glyceraldehyde 3-phosphate binding. The residue at position 265 (threonine 265) is a Phosphothreonine. Serine 269 is modified (phosphoserine). Position 275 is an S-(2-succinyl)cysteine (cysteine 275). At cysteine 275 the chain carries S-nitrosocysteine. Lysine 282 carries the post-translational modification N6-acetyllysine. Residue lysine 291 is modified to N6,N6-dimethyllysine. The residue at position 340 (serine 340) is a Phosphoserine. Position 344 is a deamidated asparagine (asparagine 344). Position 344 (asparagine 344) interacts with NAD(+). Position 361 is a phosphoserine (serine 361). N6,N6-dimethyllysine is present on lysine 362.

The protein belongs to the glyceraldehyde-3-phosphate dehydrogenase family. As to quaternary structure, homotetramer. Interacts with TPPP; the interaction is direct. Interacts (when S-nitrosylated) with SIAH1; leading to nuclear translocation. Interacts with RILPL1/GOSPEL, leading to prevent the interaction between GAPDH and SIAH1 and prevent nuclear translocation. Interacts with CHP1; the interaction increases the binding of CHP1 with microtubules. Associates with microtubules. Interacts with EIF1AD, USP25, PRKCI and WARS1. Interacts with phosphorylated RPL13A; inhibited by oxidatively-modified low-densitity lipoprotein (LDL(ox)). Component of the GAIT complex. Interacts with FKBP6; leading to inhibit GAPDH catalytic activity. Interacts with TRAF2, promoting TRAF2 ubiquitination. Interacts with TRAF3, promoting TRAF3 ubiquitination. Post-translationally, ISGylated. S-nitrosylation of Cys-180 leads to interaction with SIAH1, followed by translocation to the nucleus S-nitrosylation of Cys-275 is induced by interferon-gamma and LDL(ox) implicating the iNOS-S100A8/9 transnitrosylase complex and seems to prevent interaction with phosphorylated RPL13A and to interfere with GAIT complex activity. In terms of processing, sulfhydration at Cys-180 increases catalytic activity.

The protein resides in the cytoplasm. Its subcellular location is the cytosol. It is found in the cytoskeleton. It localises to the nucleus. It catalyses the reaction D-glyceraldehyde 3-phosphate + phosphate + NAD(+) = (2R)-3-phospho-glyceroyl phosphate + NADH + H(+). The catalysed reaction is S-nitroso-L-cysteinyl-[GAPDH] + L-cysteinyl-[protein] = L-cysteinyl-[GAPDH] + S-nitroso-L-cysteinyl-[protein]. It functions in the pathway carbohydrate degradation; glycolysis; pyruvate from D-glyceraldehyde 3-phosphate: step 1/5. Glyceraldehyde-3-phosphate dehydrogenase activity is inhibited by fumarate, via the formation of S-(2-succinyl)cysteine residues. Functionally, has both glyceraldehyde-3-phosphate dehydrogenase and nitrosylase activities, thereby playing a role in glycolysis and nuclear functions, respectively. Glyceraldehyde-3-phosphate dehydrogenase is a key enzyme in glycolysis that catalyzes the first step of the pathway by converting D-glyceraldehyde 3-phosphate (G3P) into 3-phospho-D-glyceroyl phosphate. Modulates the organization and assembly of the cytoskeleton. Facilitates the CHP1-dependent microtubule and membrane associations through its ability to stimulate the binding of CHP1 to microtubules. Component of the GAIT (gamma interferon-activated inhibitor of translation) complex which mediates interferon-gamma-induced transcript-selective translation inhibition in inflammation processes. Upon interferon-gamma treatment assembles into the GAIT complex which binds to stem loop-containing GAIT elements in the 3'-UTR of diverse inflammatory mRNAs (such as ceruplasmin) and suppresses their translation. Also plays a role in innate immunity by promoting TNF-induced NF-kappa-B activation and type I interferon production, via interaction with TRAF2 and TRAF3, respectively. Participates in nuclear events including transcription, RNA transport, DNA replication and apoptosis. Nuclear functions are probably due to the nitrosylase activity that mediates cysteine S-nitrosylation of nuclear target proteins such as SIRT1, HDAC2 and PRKDC. The protein is Glyceraldehyde-3-phosphate dehydrogenase, muscle of Jaculus orientalis (Greater Egyptian jerboa).